The sequence spans 88 residues: Monensin polyketide synthase acyl carrier protein (88 aa).

The 78-residue stretch at 5–82 folds into the Carrier domain; that stretch reads PFTLADLQRI…ELIDHVNERL (78 aa). Ser42 carries the O-(pantetheine 4'-phosphoryl)serine modification.

In terms of processing, 4'-phosphopantetheine is transferred from CoA to a specific serine of the apo-ACP-like protein.

It functions in the pathway antifungal biosynthesis; monensin biosynthesis. Acyl carrier protein. This Streptomyces virginiae (Streptomyces cinnamonensis) protein is Monensin polyketide synthase acyl carrier protein.